Reading from the N-terminus, the 160-residue chain is UPF0262 protein BSUIS_A0274 (160 aa).

The protein belongs to the UPF0262 family.

This chain is UPF0262 protein BSUIS_A0274, found in Brucella suis (strain ATCC 23445 / NCTC 10510).